The sequence spans 499 residues: MSSVCALLLSCALFLVAHGSLQERRLYEDLMRNYNNLERPVANHSEPVTVHLKVALQQIIDVDEKNQVVYVNAWLDYTWKDYNLVWDQAEYGNITDVRFPAGKIWKPDVLLYNSVDTNFDSTYQTNMIVYSSGLVHWVPPGIFKISCKIDIQWFPFDEQKCFFKFGSWTYDGYKLDLQPATGGFDISEYLPNGEWALPLTTVERNEKFYDCCPEPYPDVHFYLHMRRRTLYYGFNLIMPCILTTLMTLLGFTLPPDAGEKITLQITVLLSICFFLSIVSEMSPPTSEAVPLLGIFFTCCMIVVTASTVFTVYVLNLHYRTPETHDMGPWTRNLLLYWIPWILRMKRPGHNLTYASLPSLFASKPNRHSESLIRNIKDNEHSLSRANSFDADCRLNQYIMTQSVSNGLTSMGSIPSTMISSTNGALTDVSQQATLLILHRIYHELKIVTKRMIEGDKEEQASNNWKFAAMVVDRLCLYVFTIFIIASTIGIFWSAPYLVA.

The first 19 residues, 1–19 (MSSVCALLLSCALFLVAHG), serve as a signal peptide directing secretion. At 20-232 (SLQERRLYED…LHMRRRTLYY (213 aa)) the chain is on the extracellular side. N-linked (GlcNAc...) asparagine glycans are attached at residues N43 and N93. 2 disulfide bridges follow: C147–C161 and C211–C212. Helical transmembrane passes span 233–253 (GFNLIMPCILTTLMTLLGFTL), 261–281 (ITLQITVLLSICFFLSIVSEM), and 289–309 (VPLLGIFFTCCMIVVTASTVF). Topologically, residues 310–473 (TVYVLNLHYR…WKFAAMVVDR (164 aa)) are cytoplasmic. A helical membrane pass occupies residues 474-494 (LCLYVFTIFIIASTIGIFWSA). Over 495–499 (PYLVA) the chain is Extracellular.

This sequence belongs to the ligand-gated ion channel (TC 1.A.9) family. Acetylcholine receptor (TC 1.A.9.1) subfamily.

Its subcellular location is the postsynaptic cell membrane. The protein resides in the cell membrane. In terms of biological role, after binding acetylcholine, the AChR responds by an extensive change in conformation that affects all subunits and leads to opening of an ion-conducting channel across the plasma membrane. A subunit of the levamisole-insensitive nicotinic receptor. This is Acetylcholine receptor subunit alpha-type acr-16 from Caenorhabditis briggsae.